Consider the following 172-residue polypeptide: MSDEITNGAAKPTEAISGPTFTIEKIYIKDVSFEAPNSPAVFNEAGQPELQLNLNQRVQRLNENAFELVLHVTLTCTAAGKTAYVVEVQQAGVFGLFGLDQHAIGVLLGTQCPNILFPYVRSLVSDLIQIGGFPPFYLQPINFDALYAETLRQRAQNEKEGSQISSHPAGNA.

The protein belongs to the SecB family. In terms of assembly, homotetramer, a dimer of dimers. One homotetramer interacts with 1 SecA dimer.

The protein resides in the cytoplasm. Functionally, one of the proteins required for the normal export of preproteins out of the cell cytoplasm. It is a molecular chaperone that binds to a subset of precursor proteins, maintaining them in a translocation-competent state. It also specifically binds to its receptor SecA. The sequence is that of Protein-export protein SecB from Xylella fastidiosa (strain 9a5c).